A 392-amino-acid polypeptide reads, in one-letter code: Transcription factor GATA-4 (392 aa).

A disordered region spans residues 75-113 (SSAYNPGTSHPPVSPRFTFSSSPPITAPSSREVSYSSPL). Positions 91–113 (FTFSSSPPITAPSSREVSYSSPL) are enriched in polar residues. 2 consecutive GATA-type zinc fingers follow at residues 184 to 208 (CVNC…CNAC) and 238 to 262 (CANC…CNAC). Disordered regions lie at residues 279-339 (KEGI…HSNS) and 359-392 (MPSL…LVLA). Over residues 284-293 (TRKRKPKNLS) the composition is skewed to basic residues. The segment covering 302–316 (SGSDSLTPSTSSTNS) has biased composition (low complexity). The segment covering 364–380 (LSPQNHHSTFNPSPQAN) has biased composition (polar residues).

In terms of tissue distribution, expressed at high levels in heart, small intestine, stomach, ovary, and liver. Found at much lower levels in lung, spleen, pancreas and skin.

It is found in the nucleus. Transcriptional activator that binds to the consensus sequence 5'-AGATAG-3'. Associated with cardiac specification and can regulate cardiac-specific transcription during embryogenesis. Activates the expression of cardiac MHC-alpha in vivo. The protein is Transcription factor GATA-4 (gata4) of Xenopus laevis (African clawed frog).